Here is a 645-residue protein sequence, read N- to C-terminus: 1-deoxy-D-xylulose-5-phosphate synthase 1 (645 aa).

Residues H79 and 120–122 contribute to the thiamine diphosphate site; that span reads GHS. Residue D151 coordinates Mg(2+). Thiamine diphosphate-binding positions include 152–153, N180, Y291, and E373; that span reads GS. N180 contributes to the Mg(2+) binding site.

This sequence belongs to the transketolase family. DXPS subfamily. As to quaternary structure, homodimer. Mg(2+) is required as a cofactor. Requires thiamine diphosphate as cofactor.

It catalyses the reaction D-glyceraldehyde 3-phosphate + pyruvate + H(+) = 1-deoxy-D-xylulose 5-phosphate + CO2. It participates in metabolic intermediate biosynthesis; 1-deoxy-D-xylulose 5-phosphate biosynthesis; 1-deoxy-D-xylulose 5-phosphate from D-glyceraldehyde 3-phosphate and pyruvate: step 1/1. Its function is as follows. Catalyzes the acyloin condensation reaction between C atoms 2 and 3 of pyruvate and glyceraldehyde 3-phosphate to yield 1-deoxy-D-xylulose-5-phosphate (DXP). This is 1-deoxy-D-xylulose-5-phosphate synthase 1 from Rhodospirillum rubrum (strain ATCC 11170 / ATH 1.1.1 / DSM 467 / LMG 4362 / NCIMB 8255 / S1).